Here is a 337-residue protein sequence, read N- to C-terminus: DNA-directed RNA polymerase subunit alpha (337 aa).

Residues 1-233 (MVREKVTVST…DLFIPFLHME (233 aa)) form an alpha N-terminal domain (alpha-NTD) region. The alpha C-terminal domain (alpha-CTD) stretch occupies residues 264 to 337 (NKKIALKSIF…FVIDLAKNKF (74 aa)).

The protein belongs to the RNA polymerase alpha chain family. In plastids the minimal PEP RNA polymerase catalytic core is composed of four subunits: alpha, beta, beta', and beta''. When a (nuclear-encoded) sigma factor is associated with the core the holoenzyme is formed, which can initiate transcription.

The protein resides in the plastid. Its subcellular location is the chloroplast. The catalysed reaction is RNA(n) + a ribonucleoside 5'-triphosphate = RNA(n+1) + diphosphate. Functionally, DNA-dependent RNA polymerase catalyzes the transcription of DNA into RNA using the four ribonucleoside triphosphates as substrates. In Atropa belladonna (Belladonna), this protein is DNA-directed RNA polymerase subunit alpha.